Reading from the N-terminus, the 334-residue chain is HTH-type transcriptional repressor PurR (334 aa).

An HTH lacI-type domain is found at 2–56 (ATIKDVARLAGVSTTTVSHVINKTRFVAEATQEKVMKAVDELNYAPSAVARSLKC). The H-T-H motif DNA-binding region spans 4–23 (IKDVARLAGVSTTTVSHVIN). The DNA-binding element occupies 48–56 (SAVARSLKC). F73, K189, F220, and D274 together coordinate hypoxanthine.

As to quaternary structure, homodimer.

It functions in the pathway purine metabolism; purine nucleotide biosynthesis [regulation]. Is the main repressor of the genes involved in the de novo synthesis of purine nucleotides, regulating purB, purC, purEK, purF, purHD, purL, purMN and guaBA expression. PurR is allosterically activated to bind its cognate DNA by binding the purine corepressors, hypoxanthine or guanine, thereby effecting transcription repression. The protein is HTH-type transcriptional repressor PurR of Vibrio vulnificus (strain CMCP6).